The following is a 309-amino-acid chain: UDP-N-acetylenolpyruvoylglucosamine reductase (309 aa).

One can recognise an FAD-binding PCMH-type domain in the interval R34 to I221. The active site involves R179. The active-site Proton donor is S228. The active site involves E298.

It belongs to the MurB family. It depends on FAD as a cofactor.

The protein localises to the cytoplasm. It carries out the reaction UDP-N-acetyl-alpha-D-muramate + NADP(+) = UDP-N-acetyl-3-O-(1-carboxyvinyl)-alpha-D-glucosamine + NADPH + H(+). It participates in cell wall biogenesis; peptidoglycan biosynthesis. Functionally, cell wall formation. The sequence is that of UDP-N-acetylenolpyruvoylglucosamine reductase from Methylorubrum extorquens (strain PA1) (Methylobacterium extorquens).